Consider the following 110-residue polypeptide: uncharacterized protein (110 aa).

Disordered regions lie at residues 1–42 (MEWG…RAQQ) and 66–110 (RQLG…AAEP). Residues 36-68 (REERAQQLLDAVEQRQRQLLDTIAACEEMLRQL) adopt a coiled-coil conformation.

This is an uncharacterized protein from Homo sapiens (Human).